The sequence spans 141 residues: Cell division protein SepF (141 aa).

This sequence belongs to the SepF family. Homodimer. Interacts with FtsZ.

It is found in the cytoplasm. Its function is as follows. Cell division protein that is part of the divisome complex and is recruited early to the Z-ring. Probably stimulates Z-ring formation, perhaps through the cross-linking of FtsZ protofilaments. Its function overlaps with FtsA. This is Cell division protein SepF from Anoxybacillus flavithermus (strain DSM 21510 / WK1).